We begin with the raw amino-acid sequence, 385 residues long: Beta sliding clamp (385 aa).

Belongs to the beta sliding clamp family. Forms a ring-shaped head-to-tail homodimer around DNA which binds and tethers DNA polymerases and other proteins to the DNA. The DNA replisome complex has a single clamp-loading complex (3 tau and 1 each of delta, delta', psi and chi subunits) which binds 3 Pol III cores (1 core on the leading strand and 2 on the lagging strand) each with a beta sliding clamp dimer. Additional proteins in the replisome are other copies of gamma, psi and chi, Ssb, DNA helicase and RNA primase.

It is found in the cytoplasm. Functionally, confers DNA tethering and processivity to DNA polymerases and other proteins. Acts as a clamp, forming a ring around DNA (a reaction catalyzed by the clamp-loading complex) which diffuses in an ATP-independent manner freely and bidirectionally along dsDNA. Initially characterized for its ability to contact the catalytic subunit of DNA polymerase III (Pol III), a complex, multichain enzyme responsible for most of the replicative synthesis in bacteria; Pol III exhibits 3'-5' exonuclease proofreading activity. The beta chain is required for initiation of replication as well as for processivity of DNA replication. This Borreliella burgdorferi (strain ATCC 35210 / DSM 4680 / CIP 102532 / B31) (Borrelia burgdorferi) protein is Beta sliding clamp (dnaN).